A 548-amino-acid polypeptide reads, in one-letter code: Spindle pole body-associated protein cut12 (548 aa).

Residues 122–325 form an interaction with plo1 region; it reads FKSPLLQSTP…GQQSKYKGKE (204 aa). A disordered region spans residues 123–182; that stretch reads KSPLLQSTPKPNINNPDNENKSKHDEFDNRYNININESYKNETKSNQRLGEDVPSKKKYP. Over residues 126–139 the composition is skewed to polar residues; the sequence is LLQSTPKPNINNPD. 2 stretches are compositionally biased toward basic and acidic residues: residues 140-151 and 161-182; these read NENKSKHDEFDN and YKNETKSNQRLGEDVPSKKKYP. A coiled-coil region spans residues 261 to 312; the sequence is KQKFSMLDSAHSDLELELTSIRERLESLILEKQEEINFWKQRCRALETEKIH. Over residues 344–356 the composition is skewed to polar residues; it reads PITTKVVSRPSQS. Disordered stretches follow at residues 344 to 369 and 510 to 548; these read PITTKVVSRPSQSDVREPQEQVPSKN and SRVDYDLKSPNQRTANAKKRLEERRRRRKLKLQELQLNS. A coiled-coil region spans residues 522-548; the sequence is RTANAKKRLEERRRRRKLKLQELQLNS.

Self-associates. Interacts with plo1.

The protein resides in the cytoplasm. The protein localises to the cytoskeleton. It localises to the microtubule organizing center. It is found in the spindle pole body. In terms of biological role, required for bipolar spindle formation. May act as a regulator of the p34cdc2/cyclin B kinase. Required for full activation of the plo1 kinase. However, in cut12.1 cells at restrictive temperature the H1 kinase does rise concomitant with entry into mitosis, indicating that cut12 is not required for activation of p34cdc2/cyclin B. The cut12.s11 allele may promote cdc2-independent phosphorylation of SPB proteins thereby overcoming the requirement for cdc25 in cell cycle progression. The protein is Spindle pole body-associated protein cut12 (cut12) of Schizosaccharomyces pombe (strain 972 / ATCC 24843) (Fission yeast).